Here is a 103-residue protein sequence, read N- to C-terminus: Large ribosomal subunit protein eL21 (103 aa).

The protein belongs to the eukaryotic ribosomal protein eL21 family.

This is Large ribosomal subunit protein eL21 from Sulfolobus acidocaldarius (strain ATCC 33909 / DSM 639 / JCM 8929 / NBRC 15157 / NCIMB 11770).